The sequence spans 92 residues: Small ribosomal subunit protein uS19 (92 aa).

This sequence belongs to the universal ribosomal protein uS19 family.

Functionally, protein S19 forms a complex with S13 that binds strongly to the 16S ribosomal RNA. This is Small ribosomal subunit protein uS19 from Treponema denticola (strain ATCC 35405 / DSM 14222 / CIP 103919 / JCM 8153 / KCTC 15104).